Consider the following 387-residue polypeptide: Erythronate-4-phosphate dehydrogenase (387 aa).

Residues serine 45 and threonine 67 each coordinate substrate. Aspartate 147 serves as a coordination point for NAD(+). The active site involves arginine 208. Aspartate 232 provides a ligand contact to NAD(+). Residue glutamate 237 is part of the active site. Histidine 254 functions as the Proton donor in the catalytic mechanism. Glycine 257 contacts NAD(+). Residue tyrosine 258 coordinates substrate.

The protein belongs to the D-isomer specific 2-hydroxyacid dehydrogenase family. PdxB subfamily. As to quaternary structure, homodimer.

The protein resides in the cytoplasm. It carries out the reaction 4-phospho-D-erythronate + NAD(+) = (R)-3-hydroxy-2-oxo-4-phosphooxybutanoate + NADH + H(+). It participates in cofactor biosynthesis; pyridoxine 5'-phosphate biosynthesis; pyridoxine 5'-phosphate from D-erythrose 4-phosphate: step 2/5. In terms of biological role, catalyzes the oxidation of erythronate-4-phosphate to 3-hydroxy-2-oxo-4-phosphonooxybutanoate. In Shewanella sediminis (strain HAW-EB3), this protein is Erythronate-4-phosphate dehydrogenase.